The primary structure comprises 33 residues: GIMDTLKNLAKTAGKGALQSLVKMASCKLSGQC.

An intrachain disulfide couples C27 to C33.

In terms of tissue distribution, expressed by the skin glands.

It is found in the secreted. Its function is as follows. Shows antibacterial activity against representative Gram-negative and Gram-positive bacterial species, and hemolytic activity. The protein is Brevinin-2Ef of Pelophylax ridibundus (Marsh frog).